The chain runs to 323 residues: Sphingolipid delta(4)-desaturase DES1 (323 aa).

2 consecutive transmembrane segments (helical) span residues 41-61 (YNLI…FYLV) and 68-88 (WVVF…TLAI). A Histidine box-1 motif is present at residues 89–93 (HEISH). Residues 102–122 (AMWNRWFGIFANLPLGLPYSI) form a helical membrane-spanning segment. The Histidine box-2 motif lies at 128–132 (HMDHH). 3 helical membrane-spanning segments follow: residues 159 to 179 (KFIW…CINP), 185 to 205 (LEII…YLWG), and 209 to 229 (IFYM…SGHF). The Histidine box-3 motif lies at 259–263 (HNEHH).

It belongs to the fatty acid desaturase type 1 family. DEGS subfamily. As to quaternary structure, interacts with RLBP1; the interaction increases synthesis of chromophore-precursors by DEGS1. As to expression, expressed in retina and retinal pigment epithelium by Mueller cells (at protein level).

The protein localises to the endoplasmic reticulum membrane. It carries out the reaction an N-acylsphinganine + 2 Fe(II)-[cytochrome b5] + O2 + 2 H(+) = an N-acylsphing-4-enine + 2 Fe(III)-[cytochrome b5] + 2 H2O. It catalyses the reaction all-trans-retinol = 11-cis-retinol. The catalysed reaction is all-trans-retinol = 9-cis-retinol. The enzyme catalyses all-trans-retinol = 13-cis-retinol. It carries out the reaction 11-cis-retinol = 13-cis-retinol. It catalyses the reaction 11-cis-retinol = 9-cis-retinol. Its function is as follows. Has sphingolipid-delta-4-desaturase activity. Converts D-erythro-sphinganine to D-erythro-sphingosine (E-sphing-4-enine). Catalyzes the equilibrium isomerization of retinols. The sequence is that of Sphingolipid delta(4)-desaturase DES1 (DEGS1) from Gallus gallus (Chicken).